The sequence spans 182 residues: Adenine phosphoribosyltransferase (182 aa).

This sequence belongs to the purine/pyrimidine phosphoribosyltransferase family. As to quaternary structure, homodimer.

The protein resides in the cytoplasm. The catalysed reaction is AMP + diphosphate = 5-phospho-alpha-D-ribose 1-diphosphate + adenine. The protein operates within purine metabolism; AMP biosynthesis via salvage pathway; AMP from adenine: step 1/1. Catalyzes a salvage reaction resulting in the formation of AMP, that is energically less costly than de novo synthesis. This is Adenine phosphoribosyltransferase from Pseudomonas entomophila (strain L48).